The primary structure comprises 161 residues: Cytochrome c-type biogenesis protein CcmE (161 aa).

At 1-8 the chain is on the cytoplasmic side; sequence MNPRRKKR. A helical; Signal-anchor for type II membrane protein transmembrane segment spans residues 9–29; the sequence is LGIVLAIFIGISATIGLMLYA. Residues 30 to 161 are Periplasmic-facing; that stretch reads LNQNMDLFYT…SSEQKQGSGE (132 aa). The heme site is built by histidine 129 and tyrosine 133. The tract at residues 142–161 is disordered; the sequence is MKKTHEPLQYSSEQKQGSGE. Positions 150 to 161 are enriched in polar residues; it reads QYSSEQKQGSGE.

It belongs to the CcmE/CycJ family.

It localises to the cell inner membrane. In terms of biological role, heme chaperone required for the biogenesis of c-type cytochromes. Transiently binds heme delivered by CcmC and transfers the heme to apo-cytochromes in a process facilitated by CcmF and CcmH. The sequence is that of Cytochrome c-type biogenesis protein CcmE from Vibrio parahaemolyticus serotype O3:K6 (strain RIMD 2210633).